The following is a 225-amino-acid chain: Phosphoribosyltransferase domain-containing protein 1 (225 aa).

A2 is modified (N-acetylalanine). Mg(2+) is bound by residues E141 and D142. GMP contacts are provided by residues 141 to 149 (EDVVGTGRT), K173, 194 to 195 (FV), and D201. Residue D201 participates in Mg(2+) binding.

It belongs to the purine/pyrimidine phosphoribosyltransferase family. In terms of assembly, homodimer.

Has low, barely detectable phosphoribosyltransferase activity (in vitro). Binds GMP, IMP and alpha-D-5-phosphoribosyl 1-pyrophosphate (PRPP). Is not expected to contribute to purine metabolism or GMP salvage. This chain is Phosphoribosyltransferase domain-containing protein 1 (PRTFDC1), found in Homo sapiens (Human).